The sequence spans 130 residues: Small ribosomal subunit protein uS11 (130 aa).

Belongs to the universal ribosomal protein uS11 family. Part of the 30S ribosomal subunit. Interacts with proteins S7 and S18. Binds to IF-3.

Located on the platform of the 30S subunit, it bridges several disparate RNA helices of the 16S rRNA. Forms part of the Shine-Dalgarno cleft in the 70S ribosome. The sequence is that of Small ribosomal subunit protein uS11 from Synechococcus sp. (strain CC9902).